The sequence spans 429 residues: Tol-Pal system protein TolB (429 aa).

An N-terminal signal peptide occupies residues 1-21 (MKPVFKMLLSLLILWTSLLHA).

Belongs to the TolB family. As to quaternary structure, the Tol-Pal system is composed of five core proteins: the inner membrane proteins TolA, TolQ and TolR, the periplasmic protein TolB and the outer membrane protein Pal. They form a network linking the inner and outer membranes and the peptidoglycan layer.

The protein resides in the periplasm. Functionally, part of the Tol-Pal system, which plays a role in outer membrane invagination during cell division and is important for maintaining outer membrane integrity. TolB occupies a key intermediary position in the Tol-Pal system because it communicates directly with both membrane-embedded components, Pal in the outer membrane and TolA in the inner membrane. This Hamiltonella defensa subsp. Acyrthosiphon pisum (strain 5AT) protein is Tol-Pal system protein TolB.